Here is an 810-residue protein sequence, read N- to C-terminus: MKISVNWLKEFVPSLSFDCSGLVDYLTFLGLEVEDVFEQKLPDQKVIVGKIVEVRPHPNADRLRICMVDTGEGELRQIVCGAPNVEAGMMVPVATIGAVLTAVSGETFTIKPAKIRGEHSSGMICAADELGLSDDHDGVMVLDEACEIGQPLARYLETDTVLDIAVTPNRPDALSHLGVARELADCNEIVYPQAPVIEFTRGGGLIEVQDEESCPYYTATVIKGVTVGPSPRWLARRLEQIGLRPKNNIVDITNYILHSFGQPLHAFDYHQLAGSRIVVRSDAESSFMALNKVEYQLQPGMTVVCDAREPVAIGGVMGGLHSAVTDKTTDILLEAAYFNPASVRKTAKQLQLSSDSSYRFERGVDPCNVKRAAEYAIAMILEIAGGNVDSAEAWGDMPAAQKIVSLRPKRVNAVLGSSITASRMVRLLEKICIKAVSQEAVSDDVDSIAFSVPSFRVDIEQEIDLIEEVARLYGYNNLEPAPVMVSSYPVSRKVPEYFPDYLRSIMIGLNFREVLTNPLIRKAEADCFSSMLVNVLNPISEELEVLRPNLAPSLLKVVGYNMRHGNRELRLFEVAHGFEKQPEAGRGNEGPLSAFLEKELLSMVITGRREPRSWNRQDENVDFYDLRGVVEMLLEKLNLLEKSAFNIYNARTIGIEITSTENGKTSVLKAGTVQQVNREVLDVFGLDQDVYLAELDVTLLERCFESGVIYEPPSKFPVVERDLSFVLPRHIPAQRLIDLAKASDPRVRSVRIFDVFDRGTTQGEPSTRSVALSLELADRSGTMNEEAISAVISKVIDNARSELGAVIRQV.

In terms of domain architecture, tRNA-binding spans 40-153; the sequence is KLPDQKVIVG…EACEIGQPLA (114 aa). Residues 399-480 form the B5 domain; sequence AAQKIVSLRP…RLYGYNNLEP (82 aa). Mg(2+)-binding residues include aspartate 458, aspartate 464, glutamate 467, and glutamate 468. An FDX-ACB domain is found at 714–808; that stretch reads SKFPVVERDL…ARSELGAVIR (95 aa).

The protein belongs to the phenylalanyl-tRNA synthetase beta subunit family. Type 1 subfamily. Tetramer of two alpha and two beta subunits. It depends on Mg(2+) as a cofactor.

Its subcellular location is the cytoplasm. It carries out the reaction tRNA(Phe) + L-phenylalanine + ATP = L-phenylalanyl-tRNA(Phe) + AMP + diphosphate + H(+). The sequence is that of Phenylalanine--tRNA ligase beta subunit from Chlorobaculum tepidum (strain ATCC 49652 / DSM 12025 / NBRC 103806 / TLS) (Chlorobium tepidum).